Here is a 548-residue protein sequence, read N- to C-terminus: Chaperonin GroEL 2 (548 aa).

ATP-binding positions include 30-33 (TLGP), K51, 87-91 (DGTTT), G415, and D496. The disordered stretch occupies residues 529 to 548 (KDAMPSPDMGGMGGMGGMGF). The segment covering 538–548 (GGMGGMGGMGF) has biased composition (gly residues).

It belongs to the chaperonin (HSP60) family. Forms a cylinder of 14 subunits composed of two heptameric rings stacked back-to-back. Interacts with the co-chaperonin GroES.

It is found in the cytoplasm. It catalyses the reaction ATP + H2O + a folded polypeptide = ADP + phosphate + an unfolded polypeptide.. Together with its co-chaperonin GroES, plays an essential role in assisting protein folding. The GroEL-GroES system forms a nano-cage that allows encapsulation of the non-native substrate proteins and provides a physical environment optimized to promote and accelerate protein folding. The protein is Chaperonin GroEL 2 of Rhodospirillum rubrum (strain ATCC 11170 / ATH 1.1.1 / DSM 467 / LMG 4362 / NCIMB 8255 / S1).